Consider the following 355-residue polypeptide: Alanine racemase (355 aa).

Residue Lys-34 is the Proton acceptor; specific for D-alanine of the active site. An N6-(pyridoxal phosphate)lysine modification is found at Lys-34. Arg-133 provides a ligand contact to substrate. The Proton acceptor; specific for L-alanine role is filled by Tyr-249. Met-297 contributes to the substrate binding site.

This sequence belongs to the alanine racemase family. Pyridoxal 5'-phosphate serves as cofactor.

The catalysed reaction is L-alanine = D-alanine. Its pathway is amino-acid biosynthesis; D-alanine biosynthesis; D-alanine from L-alanine: step 1/1. Functionally, catalyzes the interconversion of L-alanine and D-alanine. May also act on other amino acids. The protein is Alanine racemase (alr) of Rickettsia akari (strain Hartford).